The primary structure comprises 79 residues: ATP synthase subunit beta (79 aa).

The protein belongs to the ATPase alpha/beta chains family. F-type ATPases have 2 components, CF(1) - the catalytic core - and CF(0) - the membrane proton channel. CF(1) has five subunits: alpha(3), beta(3), gamma(1), delta(1), epsilon(1). CF(0) has three main subunits: a(1), b(2) and c(9-12). The alpha and beta chains form an alternating ring which encloses part of the gamma chain. CF(1) is attached to CF(0) by a central stalk formed by the gamma and epsilon chains, while a peripheral stalk is formed by the delta and b chains.

Its subcellular location is the cell membrane. It carries out the reaction ATP + H2O + 4 H(+)(in) = ADP + phosphate + 5 H(+)(out). In terms of biological role, produces ATP from ADP in the presence of a proton gradient across the membrane. The catalytic sites are hosted primarily by the beta subunits. This chain is ATP synthase subunit beta (atpD), found in Streptococcus downei (Streptococcus sobrinus).